The following is a 662-amino-acid chain: Transcription activator of gluconeogenesis NECHADRAFT_59099 (662 aa).

The tract at residues 1-61 (MPHEMEENGA…KDPLRPRRKK (61 aa)) is disordered. Composition is skewed to basic and acidic residues over residues 25 to 34 (TFLKDDEKMT) and 43 to 56 (TEVK…DPLR). The zn(2)-C6 fungal-type DNA-binding region spans 66-94 (CFACQRAHLTCGDERPCQRCIKRGLADAC). 3 disordered regions span residues 105 to 149 (LHDA…TGSN), 502 to 524 (YSGR…MTTP), and 580 to 606 (YRAP…SSRV). 2 stretches are compositionally biased toward polar residues: residues 121–130 (YNPTPTPSRT) and 137–149 (SSQS…TGSN). In terms of domain architecture, PAS spans 448–519 (TLVEYDDFLQ…TNTPDHNSQG (72 aa)). A compositionally biased stretch (basic and acidic residues) spans 582–593 (APQDPDQKEPGS).

Belongs to the ERT1/acuK family.

Its subcellular location is the nucleus. Functionally, transcription factor which regulates nonfermentable carbon utilization. Activator of gluconeogenetic genes. This is Transcription activator of gluconeogenesis NECHADRAFT_59099 from Fusarium vanettenii (strain ATCC MYA-4622 / CBS 123669 / FGSC 9596 / NRRL 45880 / 77-13-4) (Fusarium solani subsp. pisi).